A 327-amino-acid polypeptide reads, in one-letter code: Lipoyl synthase (327 aa).

Residues cysteine 72, cysteine 77, cysteine 83, cysteine 98, cysteine 102, cysteine 105, and serine 313 each coordinate [4Fe-4S] cluster. Residues 83 to 302 (CWSHGTATIM…RKVGLEKGFL (220 aa)) form the Radical SAM core domain.

This sequence belongs to the radical SAM superfamily. Lipoyl synthase family. Requires [4Fe-4S] cluster as cofactor.

The protein localises to the cytoplasm. The enzyme catalyses [[Fe-S] cluster scaffold protein carrying a second [4Fe-4S](2+) cluster] + N(6)-octanoyl-L-lysyl-[protein] + 2 oxidized [2Fe-2S]-[ferredoxin] + 2 S-adenosyl-L-methionine + 4 H(+) = [[Fe-S] cluster scaffold protein] + N(6)-[(R)-dihydrolipoyl]-L-lysyl-[protein] + 4 Fe(3+) + 2 hydrogen sulfide + 2 5'-deoxyadenosine + 2 L-methionine + 2 reduced [2Fe-2S]-[ferredoxin]. It functions in the pathway protein modification; protein lipoylation via endogenous pathway; protein N(6)-(lipoyl)lysine from octanoyl-[acyl-carrier-protein]: step 2/2. In terms of biological role, catalyzes the radical-mediated insertion of two sulfur atoms into the C-6 and C-8 positions of the octanoyl moiety bound to the lipoyl domains of lipoate-dependent enzymes, thereby converting the octanoylated domains into lipoylated derivatives. This chain is Lipoyl synthase, found in Francisella tularensis subsp. holarctica (strain FTNF002-00 / FTA).